The sequence spans 492 residues: Aerolysin-3 (492 aa).

Residues 1 to 23 (MKKLKITGLSLIISGLLMAQAQA) form the signal peptide. 2 disulfide bridges follow: cysteine 42/cysteine 98 and cysteine 182/cysteine 187. Positions 68 to 84 (WQISGLANGWVIMGPGY) are interaction with host N-linked glycan. The interval 256–288 (YGLSEKVTTKNKFKWPLVGETELSIEIAANQSW) is part of the transmembrane beta-barrel after proteolytic activation of the toxin and insertion into the host membrane. Residues 346–355 (RWGGNAWYTH) form an interaction with glycans from host GPI-anchor region. Positions 446-492 (AAASHSSRARNLSAGQGLRLEIPLDAQELSGLGFNNVSLSVTPAANQ) are excised as a propeptide.

The protein belongs to the aerolysin family. As to quaternary structure, homodimer in solution; homoheptamer in the host membrane. After binding to GPI-anchored proteins in target membranes and proteolytic removal of the C-terminal propeptide, the protein assembles into a heptameric pre-pore complex. A further conformation change leads to insertion into the host membrane. In terms of processing, proteolytic cleavage and subsequent release of the propeptide trigger a major conformation change, leading to the formation of a heptameric pre-pore that then inserts into the host membrane.

It localises to the secreted. The protein resides in the host cell membrane. Its function is as follows. Secreted, cytolytic toxin that forms pores in host membranes after proteolytic removal of a C-terminal propeptide, leading to destruction of the membrane permeability barrier and cell death. The pores are formed by transmembrane beta-strands and are approximately 3 nm in diameter. The chain is Aerolysin-3 (ahh3) from Aeromonas hydrophila.